The primary structure comprises 327 residues: Delta-aminolevulinic acid dehydratase (327 aa).

Zn(2+) is bound by residues cysteine 119, cysteine 121, and cysteine 129. Catalysis depends on lysine 198, which acts as the Schiff-base intermediate with substrate. Positions 208 and 220 each coordinate 5-aminolevulinate. Glutamate 236 is a Mg(2+) binding site. Residue lysine 251 is the Schiff-base intermediate with substrate of the active site. Serine 277 and tyrosine 316 together coordinate 5-aminolevulinate.

Belongs to the ALAD family. Homooctamer. It depends on Zn(2+) as a cofactor.

It carries out the reaction 2 5-aminolevulinate = porphobilinogen + 2 H2O + H(+). It participates in porphyrin-containing compound metabolism; protoporphyrin-IX biosynthesis; coproporphyrinogen-III from 5-aminolevulinate: step 1/4. Catalyzes an early step in the biosynthesis of tetrapyrroles. Binds two molecules of 5-aminolevulinate per subunit, each at a distinct site, and catalyzes their condensation to form porphobilinogen. This is Delta-aminolevulinic acid dehydratase (hemB) from Synechocystis sp. (strain ATCC 27184 / PCC 6803 / Kazusa).